The primary structure comprises 201 residues: Heat shock protein beta-1 (201 aa).

Ser15 carries the phosphoserine; by PKA and PKC modification. The 111-residue stretch at 83–193 (ALSRQMSSGM…SETTIPVNVE (111 aa)) folds into the sHSP domain.

The protein belongs to the small heat shock protein (HSP20) family. Homooligomer. Homodimer; becomes monomeric upon activation. Heterooligomer.

The protein resides in the cytoplasm. The protein localises to the nucleus. Its subcellular location is the cytoskeleton. It localises to the spindle. Functionally, small heat shock protein which functions as a molecular chaperone probably maintaining denatured proteins in a folding-competent state. Plays a role in stress resistance and actin organization. This chain is Heat shock protein beta-1 (hspb1), found in Poeciliopsis lucida (Desert topminnow).